A 425-amino-acid chain; its full sequence is Enolase (425 aa).

Glutamine 162 is a (2R)-2-phosphoglycerate binding site. Glutamate 204 acts as the Proton donor in catalysis. Residues aspartate 241, glutamate 284, and aspartate 311 each coordinate Mg(2+). (2R)-2-phosphoglycerate-binding residues include lysine 336, arginine 365, serine 366, and lysine 387. The Proton acceptor role is filled by lysine 336.

It belongs to the enolase family. Requires Mg(2+) as cofactor.

It is found in the cytoplasm. It localises to the secreted. The protein localises to the cell surface. The catalysed reaction is (2R)-2-phosphoglycerate = phosphoenolpyruvate + H2O. It participates in carbohydrate degradation; glycolysis; pyruvate from D-glyceraldehyde 3-phosphate: step 4/5. Functionally, catalyzes the reversible conversion of 2-phosphoglycerate (2-PG) into phosphoenolpyruvate (PEP). It is essential for the degradation of carbohydrates via glycolysis. This is Enolase from Brucella ovis (strain ATCC 25840 / 63/290 / NCTC 10512).